A 669-amino-acid polypeptide reads, in one-letter code: PDF receptor (669 aa).

Residues 1-244 (MTLLSNILDC…DIARRTRTLE (244 aa)) lie on the Extracellular side of the membrane. Residues 24-52 (RQSGSSGPSPSAPTAGTFESKSMLEPTSS) form a disordered region. Over residues 26–40 (SGSSGPSPSAPTAGT) the composition is skewed to low complexity. Asn111, Asn117, Asn130, Asn137, Asn148, and Asn198 each carry an N-linked (GlcNAc...) asparagine glycan. The chain crosses the membrane as a helical span at residues 245 to 265 (IVGLCLSLFALIVSLLIFCTF). Over 266–274 (RSLRNNRTK) the chain is Cytoplasmic. Residues 275 to 295 (IHKNLFVAMVLQVIIRLTLYL) traverse the membrane as a helical segment. Over 296–334 (DQFRRGNKEAATNTSLSVIENTPYLCEASYVLLEYARTA) the chain is Extracellular. Residue Asn308 is glycosylated (N-linked (GlcNAc...) asparagine). Residues 335-355 (MFMWMFIEGLYLHNMVTVAVF) traverse the membrane as a helical segment. The Cytoplasmic portion of the chain corresponds to 356 to 366 (QGSFPLKFFSR). Residues 367-387 (LGWCVPILMTTVWARCTVMYM) traverse the membrane as a helical segment. Topologically, residues 388–411 (DTSLGECLWNYNLTPYYWILEGPR) are extracellular. Residues 412 to 432 (LAVILLNFCFLVNIIRVLVMK) traverse the membrane as a helical segment. Residues 433 to 449 (LRQSQASDIEQTRKAVR) are Cytoplasmic-facing. The helical transmembrane segment at 450-470 (AAIVLLPLLGITNLLHQLAPL) threads the bilayer. Topologically, residues 471 to 480 (KTATNFAVWS) are extracellular. The chain crosses the membrane as a helical span at residues 481–501 (YGTHFLTSFQGFFIALIYCFL). Topologically, residues 502–669 (NGEVRAVLLK…ESVVFELSEQ (168 aa)) are cytoplasmic. 2 disordered regions span residues 536-573 (AYNT…KPSS) and 590-614 (PRLQ…AEPD). A compositionally biased stretch (basic and acidic residues) spans 595–609 (KAREKGKDRVEKTDA).

Belongs to the G-protein coupled receptor 2 family. As to expression, mainly present in clock neurons of the brain. Localizes in all 4 s-LNv neurons, 1 LNd neuron, 7 DN1 neurons, and 1 DN3 neuron. In addition to the clock neurons, it is also present in approximately 13 pairs of neurons along the ventral nerve cord in third instar larvae, which do not overlap with dopaminergic or serotonergic neurons. Not present in DN2 neurons (at protein level).

It is found in the cell membrane. In terms of biological role, receptor for PDF, a neuropeptide controlling circadian behavioral rhythms. Probably regulates circadian behavioral rhythms through coordination of activities of clock neurons. PDF-binding results in the elevation of cAMP synthesis. Plays a role in sleep regulation and regulates the state transition from sleep to wake. This chain is PDF receptor, found in Drosophila melanogaster (Fruit fly).